The following is a 213-amino-acid chain: Cell division protein SepF 2 (213 aa).

Positions 16–89 are disordered; sequence EDDGYDGRGF…ASLAAESSRP (74 aa). A compositionally biased stretch (acidic residues) spans 27-39; sequence PDDDFEPELDPEP.

It belongs to the SepF family. As to quaternary structure, homodimer. Interacts with FtsZ.

Its subcellular location is the cytoplasm. In terms of biological role, cell division protein that is part of the divisome complex and is recruited early to the Z-ring. Probably stimulates Z-ring formation, perhaps through the cross-linking of FtsZ protofilaments. Its function overlaps with FtsA. This Streptomyces coelicolor (strain ATCC BAA-471 / A3(2) / M145) protein is Cell division protein SepF 2.